The sequence spans 99 residues: Acylphosphatase-2 (99 aa).

Serine 2 carries the post-translational modification N-acetylserine. The region spanning 9 to 99 is the Acylphosphatase-like domain; the sequence is SVDYEVFGRV…LEYSNFSIRY (91 aa). Residues arginine 24 and asparagine 42 contribute to the active site. Serine 93 is subject to Phosphoserine.

The protein belongs to the acylphosphatase family.

The enzyme catalyses an acyl phosphate + H2O = a carboxylate + phosphate + H(+). Its physiological role is not yet clear. This chain is Acylphosphatase-2 (ACYP2), found in Homo sapiens (Human).